The sequence spans 155 residues: SsrA-binding protein (155 aa).

It belongs to the SmpB family.

The protein localises to the cytoplasm. Its function is as follows. Required for rescue of stalled ribosomes mediated by trans-translation. Binds to transfer-messenger RNA (tmRNA), required for stable association of tmRNA with ribosomes. tmRNA and SmpB together mimic tRNA shape, replacing the anticodon stem-loop with SmpB. tmRNA is encoded by the ssrA gene; the 2 termini fold to resemble tRNA(Ala) and it encodes a 'tag peptide', a short internal open reading frame. During trans-translation Ala-aminoacylated tmRNA acts like a tRNA, entering the A-site of stalled ribosomes, displacing the stalled mRNA. The ribosome then switches to translate the ORF on the tmRNA; the nascent peptide is terminated with the 'tag peptide' encoded by the tmRNA and targeted for degradation. The ribosome is freed to recommence translation, which seems to be the essential function of trans-translation. This chain is SsrA-binding protein, found in Streptococcus suis (strain 98HAH33).